The primary structure comprises 784 residues: Ribosome biogenesis protein BOP1 homolog (784 aa).

Residues 1 to 11 (MTKKLALKRRG) show a composition bias toward basic residues. The disordered stretch occupies residues 1–159 (MTKKLALKRR…DSDTSDEEDI (159 aa)). Composition is skewed to acidic residues over residues 27–36 (SENEEEEEDL), 45–54 (EDSTDDEGID), 62–73 (SEELQFESDEEG), and 84–111 (AEEDEESSDEEDNEEEESTDGEEVEDEE). Basic and acidic residues-rich tracts occupy residues 112–123 (KDSKSKQTDDKP) and 138–148 (LPKRDSSKPEY). Residues 149–158 (QDSDTSDEED) are compositionally biased toward acidic residues. WD repeat units lie at residues 445 to 486 (GHTD…RTIE), 488 to 526 (DEVVRCVAWCPNPKLSIIAVATGNRLLLVNPKVGDKVLV), 570 to 612 (THFK…SQIP), 615 to 653 (KSKGLIQFVLFHPVKPCFFVATQHNIRIYDLVKQELVKK), 656 to 695 (TNSKWISGMSIHPKGDNLLVSTYDKKMLWFDLDLSTKPYQ), 699 to 738 (LHRNAVRSVAFHLRYPLFASGSDDQAVIVSHGMVYNDLLQ), and 754 to 784 (RDEFGVLDVNWHPVQPWVFSTGADSTIRLYT).

The protein belongs to the WD repeat BOP1/ERB1 family.

It localises to the nucleus. It is found in the nucleolus. The protein resides in the nucleoplasm. Functionally, required for maturation of ribosomal RNAs and formation of the large ribosomal subunit. The chain is Ribosome biogenesis protein BOP1 homolog from Drosophila melanogaster (Fruit fly).